The sequence spans 197 residues: Probable molybdenum cofactor guanylyltransferase (197 aa).

GTP is bound by residues 12–14 (LAG), K24, D71, and D103. D103 lines the Mg(2+) pocket.

The protein belongs to the MobA family. Mg(2+) serves as cofactor.

It is found in the cytoplasm. The enzyme catalyses Mo-molybdopterin + GTP + H(+) = Mo-molybdopterin guanine dinucleotide + diphosphate. Functionally, transfers a GMP moiety from GTP to Mo-molybdopterin (Mo-MPT) cofactor (Moco or molybdenum cofactor) to form Mo-molybdopterin guanine dinucleotide (Mo-MGD) cofactor. In Mycobacterium avium (strain 104), this protein is Probable molybdenum cofactor guanylyltransferase.